A 182-amino-acid chain; its full sequence is MFTTIKKTVIGLFTIVRSMWMVNSHAIRPRDTILYPEVPVPVPPRFRGRIILSRDPDGDERCVACNLCAVACPVGCISLQKAEREDGRWYPEFFRINFSRCIFCGLCEEACPTTAIQMTPDFEMSEYVRQDLVYEKEHLLISGPGKYPDYNYYRVTGMAVADKPKGAAQNEAAPIDLRSLLP.

4Fe-4S ferredoxin-type domains are found at residues isoleucine 50–alanine 82 and glutamate 92–aspartate 121. Positions 62, 65, 68, 72, 101, 104, 107, and 111 each coordinate [4Fe-4S] cluster.

The protein belongs to the complex I 23 kDa subunit family. As to quaternary structure, NDH-1 is composed of 14 different subunits. Subunits NuoA, H, J, K, L, M, N constitute the membrane sector of the complex. Requires [4Fe-4S] cluster as cofactor.

The protein resides in the cell inner membrane. The catalysed reaction is a quinone + NADH + 5 H(+)(in) = a quinol + NAD(+) + 4 H(+)(out). NDH-1 shuttles electrons from NADH, via FMN and iron-sulfur (Fe-S) centers, to quinones in the respiratory chain. The immediate electron acceptor for the enzyme in this species is believed to be ubiquinone. Couples the redox reaction to proton translocation (for every two electrons transferred, four hydrogen ions are translocated across the cytoplasmic membrane), and thus conserves the redox energy in a proton gradient. In Psychrobacter arcticus (strain DSM 17307 / VKM B-2377 / 273-4), this protein is NADH-quinone oxidoreductase subunit I.